A 134-amino-acid chain; its full sequence is ATP synthase epsilon chain (134 aa).

It belongs to the ATPase epsilon chain family. As to quaternary structure, F-type ATPases have 2 components, CF(1) - the catalytic core - and CF(0) - the membrane proton channel. CF(1) has five subunits: alpha(3), beta(3), gamma(1), delta(1), epsilon(1). CF(0) has three main subunits: a, b and c.

Its subcellular location is the cell membrane. In terms of biological role, produces ATP from ADP in the presence of a proton gradient across the membrane. In Ruminococcus albus (strain ATCC 27210 / DSM 20455 / JCM 14654 / NCDO 2250 / 7), this protein is ATP synthase epsilon chain.